A 494-amino-acid polypeptide reads, in one-letter code: UDP-glucose 6-dehydrogenase (494 aa).

NAD(+)-binding positions include 11–16 (GAGYVG), aspartate 36, arginine 41, 89–93 (VNTPT), and 130–132 (STV). A disordered region spans residues 88–110 (SVNTPTKTYGMGKGRAADLKYIE). Positions 129–135 (KSTVPVR) are allosteric switch region. Catalysis depends on glutamate 161, which acts as the Proton donor/acceptor. Substrate contacts are provided by residues 161-165 (EFLAE), 220-224 (KLAAN), arginine 260, and 267-273 (KASVGFG). Glutamate 165 is a binding site for NAD(+). Residue lysine 220 is the Proton donor/acceptor of the active site. Residue cysteine 276 is the Nucleophile of the active site. NAD(+) is bound at residue 276–279 (CFQK). The segment at 321–325 (SLFNT) is important for formation of active hexamer structure. 338-339 (FK) lines the substrate pocket. Arginine 346 lines the NAD(+) pocket. Residue arginine 442 coordinates substrate. A disordered region spans residues 466-494 (VSAKRIPFASSCEIPKFSLQDPPVKKPRV).

The protein belongs to the UDP-glucose/GDP-mannose dehydrogenase family. In terms of assembly, homohexamer.

It catalyses the reaction UDP-alpha-D-glucose + 2 NAD(+) + H2O = UDP-alpha-D-glucuronate + 2 NADH + 3 H(+). The protein operates within nucleotide-sugar biosynthesis; UDP-alpha-D-glucuronate biosynthesis; UDP-alpha-D-glucuronate from UDP-alpha-D-glucose: step 1/1. With respect to regulation, UDP-alpha-D-xylose (UDX) acts as a feedback inhibitor. It binds at the same site as the substrate, but functions as allosteric inhibitor by triggering a conformation change that disrupts the active hexameric ring structure and gives rise to an inactive, horseshoe-shaped hexamer. Its function is as follows. Catalyzes the formation of UDP-alpha-D-glucuronate, a constituent of complex glycosaminoglycans. Required for the biosynthesis of chondroitin sulfate and heparan sulfate. Required for embryonic development via its role in the biosynthesis of glycosaminoglycans. The protein is UDP-glucose 6-dehydrogenase (UGDH) of Gallus gallus (Chicken).